The sequence spans 360 residues: DNA replication and repair protein RecF (360 aa).

30–37 (GQNGSGKT) lines the ATP pocket.

Belongs to the RecF family.

Its subcellular location is the cytoplasm. In terms of biological role, the RecF protein is involved in DNA metabolism; it is required for DNA replication and normal SOS inducibility. RecF binds preferentially to single-stranded, linear DNA. It also seems to bind ATP. The chain is DNA replication and repair protein RecF from Shewanella baltica (strain OS155 / ATCC BAA-1091).